A 254-amino-acid polypeptide reads, in one-letter code: MAIANKNIIFVAGLGGIGLDTSREIVKSGPKNLVILDRIDNPTAIAELKAINPKVTVTFYPYDVTVPVAETIKLLKTIFAQLKTVDLLINGAGILDDHQIERTIAVNFTGTVNTTTAIMEFWDKRKGGPGGVVANICSVTGFNAIYQVPVYSASKAAALSFTNSLARLAPITGVTAYSINPGITRTPLVHKFNSWLDVEPRVGELLLEHPTQTTLECAQNFVKAIEANKNGAIWQLDLGQLIAVEWTKHWDSHI.

10–33 (FVAGLGGIGLDTSREIVKSGPKNL) lines the NAD(+) pocket. Residue Ser-138 coordinates substrate. The Proton acceptor role is filled by Tyr-151.

This sequence belongs to the short-chain dehydrogenases/reductases (SDR) family. Homodimer.

The catalysed reaction is a primary alcohol + NAD(+) = an aldehyde + NADH + H(+). It catalyses the reaction a secondary alcohol + NAD(+) = a ketone + NADH + H(+). The protein is Alcohol dehydrogenase 1 (Adh1) of Drosophila montana (Fruit fly).